The chain runs to 356 residues: Phenylalanine dehydrogenase (356 aa).

Residue Arg-43 participates in NAD(+) binding. Residue Lys-67 coordinates L-phenylalanine. Lys-79 (proton donor/acceptor) is an active-site residue. L-phenylalanine is bound at residue 118 to 119 (PD). NAD(+)-binding positions include Asp-119, Ser-150, Thr-154, 183–189 (GLGAVGG), 206–207 (DT), Arg-211, 240–241 (AM), and 261–263 (AAN). Asn-263 lines the L-phenylalanine pocket.

Belongs to the Glu/Leu/Phe/Val dehydrogenases family. In terms of assembly, homotetramer, dimer of dimers.

It catalyses the reaction L-phenylalanine + NAD(+) + H2O = 3-phenylpyruvate + NH4(+) + NADH + H(+). It functions in the pathway amino-acid biosynthesis; L-phenylalanine biosynthesis; L-phenylalanine from phenylpyruvate (PDH route): step 1/1. With respect to regulation, subject to competitive inhibition by 3-phenylpropionate for the conversion of L-phenylalanine to phenylpyruvate. Subject to competitive inhibition by D-phenylalanine for the conversion of phenylpyruvate to L-phenylalanine. Catalyzes the reversible NAD(+)-dependent oxidative deamination of L-phenylalanine to phenylpyruvate. This is Phenylalanine dehydrogenase from Rhodococcus sp.